A 1036-amino-acid polypeptide reads, in one-letter code: uncharacterized protein (1036 aa).

This is an uncharacterized protein from Schizosaccharomyces pombe (strain 972 / ATCC 24843) (Fission yeast).